The sequence spans 138 residues: Translation initiation factor 2 subunit beta (138 aa).

Belongs to the eIF-2-beta/eIF-5 family. In terms of assembly, heterotrimer composed of an alpha, a beta and a gamma chain.

EIF-2 functions in the early steps of protein synthesis by forming a ternary complex with GTP and initiator tRNA. This is Translation initiation factor 2 subunit beta from Methanococcus maripaludis (strain C5 / ATCC BAA-1333).